The following is a 113-amino-acid chain: Dolichyl-diphosphooligosaccharide--protein glycosyltransferase subunit DAD1 (113 aa).

The residue at position 2 (Ser2) is an N-acetylserine. At Ser2–Tyr30 the chain is on the cytoplasmic side. The chain crosses the membrane as a helical span at residues Leu31–Phe51. Pro52 is a topological domain (lumenal). Residues Phe53–Leu73 traverse the membrane as a helical segment. The Cytoplasmic segment spans residues Arg74–Arg92. The helical transmembrane segment at Ala93–Gly113 threads the bilayer.

This sequence belongs to the DAD/OST2 family. In terms of assembly, component of the oligosaccharyltransferase (OST) complex. OST exists in two different complex forms which contain common core subunits RPN1, RPN2, OST48, OST4, DAD1 and TMEM258, either STT3A or STT3B as catalytic subunits, and form-specific accessory subunits. STT3A complex assembly occurs through the formation of 3 subcomplexes. Subcomplex 1 contains RPN1 and TMEM258, subcomplex 2 contains the STT3A-specific subunits STT3A, DC2/OSTC, and KCP2 as well as the core subunit OST4, and subcomplex 3 contains RPN2, DAD1, and OST48. The STT3A complex can form stable complexes with the Sec61 complex or with both the Sec61 and TRAP complexes.

Its subcellular location is the endoplasmic reticulum membrane. The protein operates within protein modification; protein glycosylation. Functionally, subunit of the oligosaccharyl transferase (OST) complex that catalyzes the initial transfer of a defined glycan (Glc(3)Man(9)GlcNAc(2) in eukaryotes) from the lipid carrier dolichol-pyrophosphate to an asparagine residue within an Asn-X-Ser/Thr consensus motif in nascent polypeptide chains, the first step in protein N-glycosylation. N-glycosylation occurs cotranslationally and the complex associates with the Sec61 complex at the channel-forming translocon complex that mediates protein translocation across the endoplasmic reticulum (ER). All subunits are required for a maximal enzyme activity. The protein is Dolichyl-diphosphooligosaccharide--protein glycosyltransferase subunit DAD1 of Bos taurus (Bovine).